The chain runs to 708 residues: Otogelin-like protein (708 aa).

A VWFD domain is found at 1–113; that stretch reads KIIVNRLARK…SWEIEKSFEV (113 aa). A glycan (N-linked (GlcNAc...) asparagine) is linked at Asn-553. Disulfide bonds link Cys-616–Cys-672, Cys-637–Cys-686, Cys-648–Cys-703, and Cys-652–Cys-705. Positions 616–708 constitute a CTCK domain; that stretch reads CKREERICQK…EPIDCTCQWN (93 aa).

This sequence belongs to the otogelin family.

The protein resides in the secreted. In Pongo abelii (Sumatran orangutan), this protein is Otogelin-like protein (OTOGL).